The following is a 500-amino-acid chain: Probable cytosol aminopeptidase (500 aa).

The Mn(2+) site is built by K268 and D273. K280 is a catalytic residue. Positions 291, 350, and 352 each coordinate Mn(2+). R354 is an active-site residue.

The protein belongs to the peptidase M17 family. Mn(2+) is required as a cofactor.

It localises to the cytoplasm. It carries out the reaction Release of an N-terminal amino acid, Xaa-|-Yaa-, in which Xaa is preferably Leu, but may be other amino acids including Pro although not Arg or Lys, and Yaa may be Pro. Amino acid amides and methyl esters are also readily hydrolyzed, but rates on arylamides are exceedingly low.. It catalyses the reaction Release of an N-terminal amino acid, preferentially leucine, but not glutamic or aspartic acids.. Its function is as follows. Presumably involved in the processing and regular turnover of intracellular proteins. Catalyzes the removal of unsubstituted N-terminal amino acids from various peptides. This Aromatoleum aromaticum (strain DSM 19018 / LMG 30748 / EbN1) (Azoarcus sp. (strain EbN1)) protein is Probable cytosol aminopeptidase.